The sequence spans 600 residues: Aspartate--tRNA(Asp/Asn) ligase (600 aa).

Glu-174 is an L-aspartate binding site. The tract at residues 198 to 201 (QLFK) is aspartate. An L-aspartate-binding site is contributed by Arg-220. ATP is bound by residues 220 to 222 (RDE) and Gln-229. An L-aspartate-binding site is contributed by His-457. Glu-491 provides a ligand contact to ATP. Arg-498 contacts L-aspartate. Residue 543–546 (GLDR) participates in ATP binding.

This sequence belongs to the class-II aminoacyl-tRNA synthetase family. Type 1 subfamily. In terms of assembly, homodimer.

It is found in the cytoplasm. The catalysed reaction is tRNA(Asx) + L-aspartate + ATP = L-aspartyl-tRNA(Asx) + AMP + diphosphate. Its function is as follows. Aspartyl-tRNA synthetase with relaxed tRNA specificity since it is able to aspartylate not only its cognate tRNA(Asp) but also tRNA(Asn). Reaction proceeds in two steps: L-aspartate is first activated by ATP to form Asp-AMP and then transferred to the acceptor end of tRNA(Asp/Asn). This Burkholderia orbicola (strain AU 1054) protein is Aspartate--tRNA(Asp/Asn) ligase.